The chain runs to 703 residues: MNAHLANEVQTISATARVGPRSLVHVIISSECLAAAGIPLAALMRGRPGLGTAANFQVEIQTRAHATGDCTPWCTAFAAYVPADAVGELLAPVVPAHPGLLPRASSAGGLFVSLPVVCDAQGVYDPYAVAALRLAWGSGASCARVILFSYDELVPPNTRYAADSTRIMRVCRHLCRYVALLGAAAPPAAKEAAAHLSMGLGESASPRPQPLARPHAGAPADPPIVGASDPPISPEEQLTAPGGDTTAAQDVSIAQENEEILALVQRAVQDVTRRHPVRARTGRAACGVASGLRQGALVHQAVSGGAMGAADADAVLAGLEPPGGGRFVAPAPHGPGGEDILNDVLTLTPGTAKPRSLVEWLDRGWEALAGGDRPDWLWSRRSISVVLRHHYGTKQRFVVVSYENSVAWGGRRARPPLLSSALATALTEACAAERVVRPHQLSPAGQAELLLRFPALEVPLRHPRPVLPPFDIAAEVAFTARIHLACLRALGQAIRAALQGGPRISQRLRYDFGPDQRAWLGEVTRRFPILLENLMRAVEGTAPDAFFHTAYALAVLAHLGGRGGRGRRVVPLGDDLPARFADSDGHYVFDYYSTSGDTLRLNNRPIAVAMDGDVSKREQSKCRFMEAVPSTAPRRVCEQYLPGESYAYLCLGFNRRLCGIVVFPGGFAFTINIAAYLSLSDPVARAAVLRFCRKVSSGNGRSR.

Residues leucine 200–threonine 246 are disordered.

The protein belongs to the herpesviridae CVC1 protein family. In terms of assembly, interacts (via C-terminus) with capsid vertex component 2/CVC2.

The protein resides in the virion. It localises to the host nucleus. Functionally, capsid vertex-specific component that plays a role during viral DNA encapsidation, assuring correct genome cleavage and presumably stabilizing capsids that contain full-length viral genomes. This Human herpesvirus 1 (strain 17) (HHV-1) protein is Capsid vertex component 1.